The sequence spans 473 residues: Mitochondrial distribution and morphology protein 10 (473 aa).

Belongs to the MDM10 family. Component of the ER-mitochondria encounter structure (ERMES) or MDM complex, composed of MMM1, MDM10, MDM12 and MDM34. Associates with the mitochondrial outer membrane sorting assembly machinery SAM(core) complex.

It localises to the mitochondrion outer membrane. Its function is as follows. Component of the ERMES/MDM complex, which serves as a molecular tether to connect the endoplasmic reticulum and mitochondria. Components of this complex are involved in the control of mitochondrial shape and protein biogenesis and may function in phospholipid exchange. MDM10 is involved in the late assembly steps of the general translocase of the mitochondrial outer membrane (TOM complex). Functions in the TOM40-specific route of the assembly of outer membrane beta-barrel proteins, including the association of TOM40 with the receptor TOM22 and small TOM proteins. Can associate with the SAM(core) complex as well as the MDM12-MMM1 complex, both involved in late steps of the major beta-barrel assembly pathway, that is responsible for biogenesis of all outer membrane beta-barrel proteins. May act as a switch that shuttles between both complexes and channels precursor proteins into the TOM40-specific pathway. Plays a role in mitochondrial morphology and in the inheritance of mitochondria. The polypeptide is Mitochondrial distribution and morphology protein 10 (Candida albicans (strain WO-1) (Yeast)).